A 263-amino-acid polypeptide reads, in one-letter code: Insertion sequence IS21-like putative ATP-binding protein (263 aa).

114-121 contributes to the ATP binding site; the sequence is GPSGTGKT.

The protein belongs to the IS21/IS1162 putative ATP-binding protein family.

This is Insertion sequence IS21-like putative ATP-binding protein (tnpB) from Bacteroides fragilis.